Here is a 268-residue protein sequence, read N- to C-terminus: Hemin import ATP-binding protein HmuV (268 aa).

The ABC transporter domain maps to 5-241; sequence LKAEAASFAL…ELIADVFDVA (237 aa). Residue 37–44 participates in ATP binding; that stretch reads GPNGAGKS.

It belongs to the ABC transporter superfamily. Heme (hemin) importer (TC 3.A.1.14.5) family. In terms of assembly, the complex is composed of two ATP-binding proteins (HmuV), two transmembrane proteins (HmuU) and a solute-binding protein (HmuT).

The protein resides in the cell inner membrane. Part of the ABC transporter complex HmuTUV involved in hemin import. Responsible for energy coupling to the transport system. This chain is Hemin import ATP-binding protein HmuV, found in Rhodopseudomonas palustris (strain ATCC BAA-98 / CGA009).